The sequence spans 1047 residues: FACT complex subunit SPT16 (1047 aa).

N-acetylalanine is present on Ala-2. Lys-139 carries the N6-acetyllysine modification. Residue Ser-188 is modified to Phosphoserine. Residues Lys-196 and Lys-223 each carry the N6-acetyllysine modification. Ser-455 carries the post-translational modification Phosphoserine. A coiled-coil region spans residues Arg-465–Lys-507. The disordered stretch occupies residues Arg-491–Met-518. Residue Lys-497 forms a Glycyl lysine isopeptide (Lys-Gly) (interchain with G-Cter in SUMO2) linkage. The span at Glu-499–Asn-514 shows a compositional bias: polar residues. Ser-508 is subject to Phosphoserine. Lys-513 is subject to N6-acetyllysine; alternate. Lys-513 is covalently cross-linked (Glycyl lysine isopeptide (Lys-Gly) (interchain with G-Cter in SUMO2); alternate). A Glycyl lysine isopeptide (Lys-Gly) (interchain with G-Cter in SUMO2) cross-link involves residue Lys-647. Phosphoserine is present on residues Ser-650 and Ser-658. 2 positions are modified to N6-acetyllysine: Lys-732 and Lys-786. The residue at position 903 (Thr-903) is a Phosphothreonine. The residue at position 904 (Lys-904) is an N6-acetyllysine. The disordered stretch occupies residues Glu-918–Lys-1047. A compositionally biased stretch (acidic residues) spans Pro-927 to Ser-973. Phosphoserine is present on residues Ser-979, Ser-982, Ser-986, and Ser-1015. Over residues Glu-985–Arg-1005 the composition is skewed to basic and acidic residues. Residues Val-1024 to Ser-1039 show a composition bias toward low complexity.

This sequence belongs to the peptidase M24 family. SPT16 subfamily. In terms of assembly, interacts with MYOG (via C-terminal region). Component of the FACT complex, a stable heterodimer of SSRP1 and SUPT16H. Also a component of a CK2-SPT16-SSRP1 complex which forms following UV irradiation, composed of SSRP1, SUPT16H, CSNK2A1, CSNK2A2 and CSNK2B. Interacts with NEK9. Binds to histone H2A-H2B. Identified in a centromere complex containing histones H2A, H2B and H4, and at least CENPA, CENPB, CENPC, CENPT, CENPN, HJURP, SUPT16H, SSRP1 and RSF1. Interacts with GTF2E2. In terms of processing, ADP-ribosylated. ADP-ribosylation by PARP1 is induced by genotoxic stress and correlates with dissociation of FACT from chromatin. In terms of tissue distribution, widely expressed. Expressed in brain, liver, heart, kidneys, lungs, spleen, thymus, ovary, and testes, with highest levels of expression observed in thymus.

It is found in the nucleus. Its subcellular location is the chromosome. Component of the FACT complex, a general chromatin factor that acts to reorganize nucleosomes. The FACT complex is involved in multiple processes that require DNA as a template such as mRNA elongation, DNA replication and DNA repair. During transcription elongation the FACT complex acts as a histone chaperone that both destabilizes and restores nucleosomal structure. It facilitates the passage of RNA polymerase II and transcription by promoting the dissociation of one histone H2A-H2B dimer from the nucleosome, then subsequently promotes the reestablishment of the nucleosome following the passage of RNA polymerase II. The FACT complex is probably also involved in phosphorylation of 'Ser-392' of p53/TP53 via its association with CK2 (casein kinase II). The sequence is that of FACT complex subunit SPT16 (Supt16h) from Mus musculus (Mouse).